A 365-amino-acid polypeptide reads, in one-letter code: Peptide chain release factor 2 (365 aa).

Residue Gln-252 is modified to N5-methylglutamine.

This sequence belongs to the prokaryotic/mitochondrial release factor family. In terms of processing, methylated by PrmC. Methylation increases the termination efficiency of RF2.

It is found in the cytoplasm. Peptide chain release factor 2 directs the termination of translation in response to the peptide chain termination codons UGA and UAA. This Yersinia pseudotuberculosis serotype O:1b (strain IP 31758) protein is Peptide chain release factor 2.